The following is a 366-amino-acid chain: Terpene cyclase-like protein flvF (366 aa).

This sequence belongs to the terpene synthase family. As to quaternary structure, homodimer.

The enzyme catalyses N,N-dimethyl-cadaverine + 2,6,9-trimethyl-13-oxatetracyclo[6.3.1.1(6,9).0(1,5)]tridecane carbocation = pre-flavunoidine + H(+). Its pathway is secondary metabolite biosynthesis; terpenoid biosynthesis. In terms of biological role, terpene cyclase-like protein; part of the gene cluster that mediates the biosynthesis of flavunoidine, an alkaloidal terpenoid with a tetracyclic cage-like core connected to dimethylcadaverine via a C-N bond and acylated with 5,5-dimethyl-L-pipecolate. The tetracyclic core is synthesized by the terpene cyclase flvE and the cytochrome P450 monooxygenase flvD. The terpene cyclase flvE catalyzes the cyclization of farnesyl pyrophosphate (FPP) to form (1R,4R,5S)-(+)-acoradiene and the cytochrome P450 monooxygenase flvD is then responsible for oxidative conversion of (1R,4R,5S)-(+)-acoradiene into the tetracyclic cage present in the final product flavunoidine. In parallel, the N-methyltransferase flvH dimethylates L-lysine to give N,N-dimethyl-L-Lysin which is decarboxylated by flvG to afford dimethylcadaverine. The terpene cyclase-like protein flvF is the enzyme that attaches the dimethylcadaverine precusor at the C-7 of the tetracyclic cage to yield pre-flavunoidine. The cytochrome monooxygenase flvC hydroxylates the C-10 position of pre-flavunoidine whereas the NRPS flvI acylates the terpenoid core at the hydroxylated C-10 with dimethylpipecolate to yield final flavunoidine. The bifunctional enzyme flvA and the dehydrogenase flvB are responsible for the synthesis of the dimethylpipecolate precursor. The PLP-dependent lyase domain of flvA might use L-O-acetyl-homoserine and alpha-keto-isovalerate to form an intermediary ketone that can cyclize intramolecularly to yield an imine. The imine can be reduced by flvB to yield the 6-carboxylated pipecolate. The C-terminal alpha-KG-dependent oxygenase domain of flvA is then proposed to catalyze the decarboxylation to yield dimethylpipecolate. The chain is Terpene cyclase-like protein flvF from Aspergillus flavus (strain ATCC 200026 / FGSC A1120 / IAM 13836 / NRRL 3357 / JCM 12722 / SRRC 167).